A 477-amino-acid polypeptide reads, in one-letter code: Probable periplasmic serine endoprotease DegP-like (477 aa).

The N-terminal stretch at 1–27 (MSIPRLKSYLTMFAAVLMLGQVLTAQA) is a signal peptide. Active-site charge relay system residues include His117, Asp147, and Ser220. Substrate contacts are provided by residues 218 to 220 (GNS) and 275 to 279 (LGVVI). PDZ domains follow at residues 264–355 (LKKD…IRNG) and 361–466 (DISV…LRQG).

Belongs to the peptidase S1C family.

Its subcellular location is the periplasm. The enzyme catalyses Acts on substrates that are at least partially unfolded. The cleavage site P1 residue is normally between a pair of hydrophobic residues, such as Val-|-Val.. Might be efficient in the degradation of transiently denatured and unfolded proteins which accumulate in the periplasm following stress conditions. The protein is Probable periplasmic serine endoprotease DegP-like of Pseudomonas putida (strain GB-1).